Consider the following 680-residue polypeptide: DNA-directed RNA polymerase subunit beta' (680 aa).

Zn(2+) is bound by residues cysteine 69, cysteine 71, cysteine 87, and cysteine 90. Residues aspartate 489, aspartate 491, and aspartate 493 each coordinate Mg(2+).

This sequence belongs to the RNA polymerase beta' chain family. RpoC1 subfamily. In terms of assembly, in plastids the minimal PEP RNA polymerase catalytic core is composed of four subunits: alpha, beta, beta', and beta''. When a (nuclear-encoded) sigma factor is associated with the core the holoenzyme is formed, which can initiate transcription. Requires Mg(2+) as cofactor. Zn(2+) serves as cofactor.

It localises to the plastid. It is found in the chloroplast. It catalyses the reaction RNA(n) + a ribonucleoside 5'-triphosphate = RNA(n+1) + diphosphate. DNA-dependent RNA polymerase catalyzes the transcription of DNA into RNA using the four ribonucleoside triphosphates as substrates. This is DNA-directed RNA polymerase subunit beta' from Manihot esculenta (Cassava).